The sequence spans 127 residues: ATP synthase epsilon chain (127 aa).

The protein belongs to the ATPase epsilon chain family. In terms of assembly, F-type ATPases have 2 components, CF(1) - the catalytic core - and CF(0) - the membrane proton channel. CF(1) has five subunits: alpha(3), beta(3), gamma(1), delta(1), epsilon(1). CF(0) has three main subunits: a, b and c.

The protein resides in the cell inner membrane. Its function is as follows. Produces ATP from ADP in the presence of a proton gradient across the membrane. The chain is ATP synthase epsilon chain from Leptospira borgpetersenii serovar Hardjo-bovis (strain JB197).